The chain runs to 711 residues: Ribosomal RNA large subunit methyltransferase K/L (711 aa).

A THUMP domain is found at 43–154 (LGYRITLWSR…RGQITIGLNF (112 aa)).

This sequence belongs to the methyltransferase superfamily. RlmKL family.

Its subcellular location is the cytoplasm. The enzyme catalyses guanosine(2445) in 23S rRNA + S-adenosyl-L-methionine = N(2)-methylguanosine(2445) in 23S rRNA + S-adenosyl-L-homocysteine + H(+). It catalyses the reaction guanosine(2069) in 23S rRNA + S-adenosyl-L-methionine = N(2)-methylguanosine(2069) in 23S rRNA + S-adenosyl-L-homocysteine + H(+). Its function is as follows. Specifically methylates the guanine in position 2445 (m2G2445) and the guanine in position 2069 (m7G2069) of 23S rRNA. This Shewanella woodyi (strain ATCC 51908 / MS32) protein is Ribosomal RNA large subunit methyltransferase K/L.